Consider the following 328-residue polypeptide: Hydrogenase-2 operon protein HybA (328 aa).

An N-terminal signal peptide occupies residues 1 to 27; it reads MNRRNFIKAASCGALLTGALPSVSHAA. 3 consecutive 4Fe-4S ferredoxin-type domains span residues 38–68, 103–134, and 136–165; these read LGMLYDSTLCVGCQACVTKCQDINFPERNPQ, NGYAYIKKQCMHCVDPNCVSVCPVSALKKDPK, and GIVHYDKDVCTGCRYCMVACPYNVPKYDYN. [4Fe-4S] cluster is bound by residues Cys47, Cys50, Cys53, Cys57, Cys112, Cys115, Cys120, Cys124, Cys145, Cys148, Cys151, Cys155, Cys174, Cys177, Cys193, and Cys197.

[4Fe-4S] cluster serves as cofactor.

The protein localises to the periplasm. In terms of biological role, participates in the periplasmic electron-transferring activity of hydrogenase 2 during its catalytic turnover. This chain is Hydrogenase-2 operon protein HybA (hybA), found in Escherichia coli O157:H7.